Here is a 218-residue protein sequence, read N- to C-terminus: MINVLLVDDHELVRAGIRRILEDIKGIKVVGEASCGEDAVKWCRANAVDVVLMDMSMPGIGGLEATRKIARSTADVKIIMLTVHTENPLPAKVMQAGAAGYLSKGAAPQEVVSAIRSVYSGQRYIASDIAQQMALSQIEPEKTESPFASLSERELQIMLMITKGQKVNEISEQLNLSPKTVNSYRYRMFSKLNIHGDVELTHLAIRHGLCNAETLSSQ.

Positions 3-119 (NVLLVDDHEL…EVVSAIRSVY (117 aa)) constitute a Response regulatory domain. At Asp-54 the chain carries 4-aspartylphosphate. An HTH luxR-type domain is found at 143–208 (TESPFASLSE…ELTHLAIRHG (66 aa)). The segment at residues 167–186 (VNEISEQLNLSPKTVNSYRY) is a DNA-binding region (H-T-H motif).

Phosphorylated and activated by BarA.

Its subcellular location is the cytoplasm. In terms of biological role, member of the two-component regulatory system UvrY/BarA involved in the regulation of carbon metabolism via the CsrA/CsrB regulatory system. UvrY activates the transcription of the untranslated csrB RNA and of barA, in an autoregulatory loop. Mediates the effects of CsrA on csrB RNA by BarA-dependent and BarA-independent mechanisms. The sequence is that of Response regulator UvrY (uvrY) from Escherichia coli O157:H7.